A 323-amino-acid polypeptide reads, in one-letter code: Aquaporin-2 (323 aa).

Helical transmembrane passes span F32–R54, Y74–G96, and C103–A123. The NPA 1 signature appears at N85–A87. N-linked (GlcNAc...) asparagine glycosylation occurs at N143. Transmembrane regions (helical) follow at residues G161–V181 and F193–G213. The short motif at N217 to S219 is the NPA 2 element. The helical transmembrane segment at Y243–I263 threads the bilayer. N292 is a glycosylation site (N-linked (GlcNAc...) asparagine).

Belongs to the MIP/aquaporin (TC 1.A.8) family.

It is found in the cell membrane. It catalyses the reaction H2O(in) = H2O(out). The catalysed reaction is glycerol(in) = glycerol(out). Functionally, aquaglyceroporin that may modulate the water content and osmolytes during anhydrobiosis. This Milnesium tardigradum (Water bear) protein is Aquaporin-2.